The chain runs to 229 residues: Small ribosomal subunit protein uS3c (229 aa).

A KH type-2 domain is found at 39–128; that stretch reads LRDNLFKQYP…RIILTILKVQ (90 aa).

This sequence belongs to the universal ribosomal protein uS3 family. Part of the 30S ribosomal subunit.

Its subcellular location is the plastid. The protein resides in the chloroplast. The chain is Small ribosomal subunit protein uS3c (rps3) from Tupiella akineta (Green alga).